The following is a 594-amino-acid chain: AT-rich interactive domain-containing protein 5A (594 aa).

Residues 1–56 are disordered; the sequence is MAAPVKGNRKQSTEGDALDPPASPKPAGKQNGIQNPISLEDSPEAGGEREEEQERE. The interval 1–300 is interaction with SOX9; that stretch reads MAAPVKGNRK…AVHLPESPQS (300 aa). Position 23 is a phosphoserine (Ser23). Residues 55 to 147 form the ARID domain; it reads REEEQAFLVS…LVLPYVRHLK (93 aa). Residues Lys85 and Lys94 each participate in a glycyl lysine isopeptide (Lys-Gly) (interchain with G-Cter in ubiquitin) cross-link. Positions 146 to 223 are disordered; it reads LKGEDDKPLP…NSTEQQGLAS (78 aa). Residues 165–189 show a composition bias toward basic and acidic residues; it reads MAKENRGDDGATERPKKAKEERRMD. Phosphoserine occurs at positions 256 and 289. Disordered stretches follow at residues 281–331 and 426–454; these read RHGA…EAQA and AESP…GAAH. Over residues 297–306 the composition is skewed to polar residues; that stretch reads SPQSPKGLTE. 2 positions are modified to phosphoserine: Ser438 and Ser463.

As to quaternary structure, interacts with SOX9. Interacts with ESR1. Interacts with RORC. Post-translationally, phosphorylated by MAPK14 on serine residues involving a TLR4 signaling pathway upon lipopolysaccharide (LPS) stimulation leading to its ubiquitination and proteasomal degradation. Ubiquitinated leading to proteasomal degradation; involving WWP1 linked to MAPK14-mediated phosphorylation upon LPS stimulation.

It localises to the nucleus. Functionally, DNA-binding protein that may regulate transcription and act as a repressor by binding to AT-rich stretches in the promoter region of target genes. May positively regulate chondrocyte-specific transcription such as of COL2A1 in collaboration with SOX9 and positively regulate histone H3 acetylation at chondrocyte-specific genes. May stimulate early-stage chondrocyte differentiation and inhibit later stage differention. Can repress ESR1-mediated transcriptional activation; proposed to act as corepressor for selective nuclear hormone receptors. As an RNA-binding protein, involved in the regulation of inflammatory response by stabilizing selective inflammation-related mRNAs, such as STAT3 and TBX21. Also stabilizes IL6 mRNA. Binds to stem loop structures located in the 3'UTRs of IL6, STAT3 and TBX21 mRNAs; at least for STAT3 prevents binding of ZC3H12A to the mRNA stem loop structure thus inhibiting its degradation activity. Contributes to elevated IL6 levels possibly implicated in autoimmunity processes. IL6-dependent stabilization of STAT3 mRNA may promote differentiation of naive CD4+ T-cells into T-helper Th17 cells. In CD4+ T-cells may also inhibit RORC-induced Th17 cell differentiation independently of IL6 signaling. Stabilization of TBX21 mRNA contributes to elevated interferon-gamma secretion in Th1 cells possibly implicated in the establishment of septic shock. Stabilizes TNFRSF4/OX40 mRNA by binding to the conserved stem loop structure in its 3'UTR; thereby competing with the mRNA-destabilizing functions of RC3H1 and endoribonuclease ZC3H12A. This is AT-rich interactive domain-containing protein 5A (ARID5A) from Homo sapiens (Human).